The sequence spans 198 residues: tRNA (pseudouridine(54)-N(1))-methyltransferase (198 aa).

S-adenosyl-L-methionine-binding positions include leucine 130, glycine 153, 176-181 (LSPLEL), and cysteine 186.

The protein belongs to the methyltransferase superfamily. TrmY family. In terms of assembly, homodimer.

The protein localises to the cytoplasm. It carries out the reaction pseudouridine(54) in tRNA + S-adenosyl-L-methionine = N(1)-methylpseudouridine(54) in tRNA + S-adenosyl-L-homocysteine + H(+). Functionally, specifically catalyzes the N1-methylation of pseudouridine at position 54 (Psi54) in tRNAs. The sequence is that of tRNA (pseudouridine(54)-N(1))-methyltransferase from Methanococcus maripaludis (strain C7 / ATCC BAA-1331).